A 425-amino-acid chain; its full sequence is Serine--tRNA ligase (425 aa).

231–233 is an L-serine binding site; it reads TAE. 262 to 264 serves as a coordination point for ATP; that stretch reads RSE. Glu285 contacts L-serine. 349 to 352 lines the ATP pocket; that stretch reads EISS. Ser385 provides a ligand contact to L-serine.

This sequence belongs to the class-II aminoacyl-tRNA synthetase family. Type-1 seryl-tRNA synthetase subfamily. In terms of assembly, homodimer. The tRNA molecule binds across the dimer.

It is found in the cytoplasm. The catalysed reaction is tRNA(Ser) + L-serine + ATP = L-seryl-tRNA(Ser) + AMP + diphosphate + H(+). It carries out the reaction tRNA(Sec) + L-serine + ATP = L-seryl-tRNA(Sec) + AMP + diphosphate + H(+). It functions in the pathway aminoacyl-tRNA biosynthesis; selenocysteinyl-tRNA(Sec) biosynthesis; L-seryl-tRNA(Sec) from L-serine and tRNA(Sec): step 1/1. Catalyzes the attachment of serine to tRNA(Ser). Is also able to aminoacylate tRNA(Sec) with serine, to form the misacylated tRNA L-seryl-tRNA(Sec), which will be further converted into selenocysteinyl-tRNA(Sec). This chain is Serine--tRNA ligase, found in Bacillus subtilis (strain 168).